A 327-amino-acid chain; its full sequence is Lipoyl synthase (327 aa).

[4Fe-4S] cluster-binding residues include Cys-66, Cys-71, Cys-77, Cys-92, Cys-96, Cys-99, and Ser-306. The Radical SAM core domain maps to 78–295 (FSKGTATFMI…EKEAYELGFS (218 aa)).

This sequence belongs to the radical SAM superfamily. Lipoyl synthase family. It depends on [4Fe-4S] cluster as a cofactor.

The protein localises to the cytoplasm. It catalyses the reaction [[Fe-S] cluster scaffold protein carrying a second [4Fe-4S](2+) cluster] + N(6)-octanoyl-L-lysyl-[protein] + 2 oxidized [2Fe-2S]-[ferredoxin] + 2 S-adenosyl-L-methionine + 4 H(+) = [[Fe-S] cluster scaffold protein] + N(6)-[(R)-dihydrolipoyl]-L-lysyl-[protein] + 4 Fe(3+) + 2 hydrogen sulfide + 2 5'-deoxyadenosine + 2 L-methionine + 2 reduced [2Fe-2S]-[ferredoxin]. It participates in protein modification; protein lipoylation via endogenous pathway; protein N(6)-(lipoyl)lysine from octanoyl-[acyl-carrier-protein]: step 2/2. Catalyzes the radical-mediated insertion of two sulfur atoms into the C-6 and C-8 positions of the octanoyl moiety bound to the lipoyl domains of lipoate-dependent enzymes, thereby converting the octanoylated domains into lipoylated derivatives. The sequence is that of Lipoyl synthase from Neisseria meningitidis serogroup B (strain ATCC BAA-335 / MC58).